Here is a 356-residue protein sequence, read N- to C-terminus: Stomatin-like protein 2, mitochondrial (356 aa).

Residues 1–28 constitute a mitochondrion transit peptide; sequence MLARAARGTGALLLKGSVQASARAPRRA. Position 17 is a phosphoserine; by PKC/PRKCZ (Ser17). Residue Tyr124 is modified to Phosphotyrosine. Lys145 is subject to N6-acetyllysine; alternate. Lys145 bears the N6-succinyllysine; alternate mark. Residues 215–252 are a coiled coil; the sequence is INVAEGKKQAQILASEAEKAEQINQAAGEASAVLAKAK. Lys233 is modified (N6-acetyllysine). The interval 326–356 is disordered; that stretch reads EAQDSVSSRSSRDVRSTDASLDEELDRVKLS. Phosphoserine is present on Ser330.

It belongs to the band 7/mec-2 family. In terms of assembly, forms homooligomers. Interacts with MFN2; may form heterooligomers with this mediator of mitochondrial fusion. Interacts with PHB1 and PHB2; stabilizes and recruits them to cardiolipin-enriched mitochondrial membranes. Interacts with CACNA2D2.

The protein localises to the cell membrane. It localises to the mitochondrion. Its subcellular location is the mitochondrion inner membrane. The protein resides in the mitochondrion intermembrane space. It is found in the membrane raft. The protein localises to the cytoplasm. It localises to the cytoskeleton. Its function is as follows. Mitochondrial protein that probably regulates the biogenesis and the activity of mitochondria. Stimulates cardiolipin biosynthesis, binds cardiolipin-enriched membranes where it recruits and stabilizes some proteins including prohibitin and may therefore act in the organization of functional microdomains in mitochondrial membranes. Through regulation of the mitochondrial function may play a role into several biological processes including cell migration, cell proliferation, T-cell activation, calcium homeostasis and cellular response to stress. May play a role in calcium homeostasis through negative regulation of calcium efflux from mitochondria. Required for mitochondrial hyperfusion a pro-survival cellular response to stress which results in increased ATP production by mitochondria. May also regulate the organization of functional domains at the plasma membrane and play a role in T-cell activation through association with the T-cell receptor signaling complex and its regulation. This chain is Stomatin-like protein 2, mitochondrial (STOML2), found in Bos taurus (Bovine).